Reading from the N-terminus, the 112-residue chain is Nucleoid-associated protein CPR_0056 (112 aa).

Residues 91–100 (ASEETSEKMG) show a composition bias toward basic and acidic residues. Residues 91–112 (ASEETSEKMGKLTGGMGMPGLF) form a disordered region. Positions 102–112 (LTGGMGMPGLF) are enriched in gly residues.

The protein belongs to the YbaB/EbfC family. Homodimer.

It is found in the cytoplasm. The protein resides in the nucleoid. Functionally, binds to DNA and alters its conformation. May be involved in regulation of gene expression, nucleoid organization and DNA protection. This is Nucleoid-associated protein CPR_0056 from Clostridium perfringens (strain SM101 / Type A).